The sequence spans 370 residues: Protein SHI RELATED SEQUENCE 1 (370 aa).

Residues 1-37 (MAGFFSLDGGGGGGGGGGNNQEDHRSNTNPPPPVSEA) are disordered. A compositionally biased stretch (gly residues) spans 8 to 19 (DGGGGGGGGGGN). C144, C147, C155, C160, C164, and C171 together coordinate Zn(2+). The zn(2)-C6 fungal-type; degenerate DNA-binding region spans 144 to 171 (CQDCGNQAKKDCSHMRCRTCCKSRGFEC). Residues 271-274 (IGGH) carry the Required for homo- and heterodimerization motif.

This sequence belongs to the SHI protein family. As to quaternary structure, forms homodimers and heterodimers with LRP1. In terms of tissue distribution, expressed in flowers, seeds and seedlings.

The protein localises to the nucleus. Functionally, transcription activator that binds DNA on 5'-ACTCTAC-3' and promotes auxin homeostasis-regulating gene expression (e.g. YUC genes), as well as genes affecting stamen development, cell expansion and timing of flowering. Synergistically with other SHI-related proteins, regulates gynoecium, stamen and leaf development in a dose-dependent manner, controlling apical-basal patterning. Promotes style and stigma formation, and influences vascular development during gynoecium development. May also have a role in the formation and/or maintenance of the shoot apical meristem (SAM). The chain is Protein SHI RELATED SEQUENCE 1 (SRS1) from Arabidopsis thaliana (Mouse-ear cress).